The primary structure comprises 94 residues: Large ribosomal subunit protein bL27 (94 aa).

The propeptide occupies 1-9 (MLKLNLQFF).

Belongs to the bacterial ribosomal protein bL27 family. In terms of processing, the N-terminus is cleaved by ribosomal processing cysteine protease Prp.

The protein is Large ribosomal subunit protein bL27 of Staphylococcus haemolyticus (strain JCSC1435).